Reading from the N-terminus, the 156-residue chain is Small ribosomal subunit protein uS7 (156 aa).

Belongs to the universal ribosomal protein uS7 family. As to quaternary structure, part of the 30S ribosomal subunit. Contacts proteins S9 and S11.

One of the primary rRNA binding proteins, it binds directly to 16S rRNA where it nucleates assembly of the head domain of the 30S subunit. Is located at the subunit interface close to the decoding center, probably blocks exit of the E-site tRNA. The protein is Small ribosomal subunit protein uS7 of Prochlorococcus marinus (strain NATL2A).